The chain runs to 614 residues: 1-deoxy-D-xylulose-5-phosphate synthase (614 aa).

Residues H74 and 115–117 (AHS) contribute to the thiamine diphosphate site. D146 provides a ligand contact to Mg(2+). Residues 147–148 (GA), N175, Y282, and E363 each bind thiamine diphosphate. Position 175 (N175) interacts with Mg(2+).

This sequence belongs to the transketolase family. DXPS subfamily. In terms of assembly, homodimer. Mg(2+) is required as a cofactor. It depends on thiamine diphosphate as a cofactor.

The enzyme catalyses D-glyceraldehyde 3-phosphate + pyruvate + H(+) = 1-deoxy-D-xylulose 5-phosphate + CO2. Its pathway is metabolic intermediate biosynthesis; 1-deoxy-D-xylulose 5-phosphate biosynthesis; 1-deoxy-D-xylulose 5-phosphate from D-glyceraldehyde 3-phosphate and pyruvate: step 1/1. In terms of biological role, catalyzes the acyloin condensation reaction between C atoms 2 and 3 of pyruvate and glyceraldehyde 3-phosphate to yield 1-deoxy-D-xylulose-5-phosphate (DXP). The protein is 1-deoxy-D-xylulose-5-phosphate synthase of Nitrosospira multiformis (strain ATCC 25196 / NCIMB 11849 / C 71).